The primary structure comprises 96 residues: DNA-directed RNA polymerase subunit Rpo11 (96 aa).

It belongs to the archaeal Rpo11/eukaryotic RPB11/RPC19 RNA polymerase subunit family. As to quaternary structure, part of the RNA polymerase complex.

The protein resides in the cytoplasm. The enzyme catalyses RNA(n) + a ribonucleoside 5'-triphosphate = RNA(n+1) + diphosphate. Its function is as follows. DNA-dependent RNA polymerase (RNAP) catalyzes the transcription of DNA into RNA using the four ribonucleoside triphosphates as substrates. The sequence is that of DNA-directed RNA polymerase subunit Rpo11 from Nanoarchaeum equitans (strain Kin4-M).